A 134-amino-acid polypeptide reads, in one-letter code: uncharacterized protein (134 aa).

This is an uncharacterized protein from Human cytomegalovirus (strain AD169) (HHV-5).